We begin with the raw amino-acid sequence, 500 residues long: Allene oxide synthase 3 (500 aa).

Residues Met1–Gly26 form a disordered region. Residues Phe297–Asn298, Lys304, and Pro365–Phe368 each bind substrate. Cys452 provides a ligand contact to heme.

This sequence belongs to the cytochrome P450 family. It depends on heme as a cofactor. In terms of tissue distribution, not expressed in dark-grown seedlings.

The catalysed reaction is (13S)-hydroperoxy-(9Z,11E,15Z)-octadecatrienoate = (9Z,13S,15Z)-12,13-epoxyoctadeca-9,11,15-trienoate + H2O. It participates in lipid metabolism; oxylipin biosynthesis. In terms of biological role, involved in the biosynthesis of jasmonic acid, a growth regulator that is implicated also as a signaling molecule in plant defense. Converts 13-hydroperoxylinolenic acid to 12,13-epoxylinolenic acid. The chain is Allene oxide synthase 3 (CYP74A3) from Oryza sativa subsp. japonica (Rice).